Reading from the N-terminus, the 98-residue chain is Tan_12Cys (98 aa).

The first 21 residues, Met-1–Asp-21, serve as a signal peptide directing secretion. A propeptide spanning residues Arg-22–Lys-28 is cleaved from the precursor.

It belongs to the teretoxin C (TC) superfamily. In terms of processing, contains 6 disulfide bonds. As to expression, expressed by the venom duct.

It is found in the secreted. This is Tan_12Cys from Terebra anilis (Auger snail).